Here is a 354-residue protein sequence, read N- to C-terminus: NADH-quinone oxidoreductase subunit H (354 aa).

8 consecutive transmembrane segments (helical) span residues 22 to 42 (ILIR…YLIL), 91 to 111 (YLIA…VIPF), 124 to 144 (LLYV…AGWA), 168 to 188 (MGFA…SAIV), 203 to 223 (ILSW…ISGV), 255 to 275 (LFFL…ALMF), 291 to 311 (IPGF…FIWI), and 326 to 346 (LGWK…AIWI).

The protein belongs to the complex I subunit 1 family. In terms of assembly, NDH-1 is composed of 14 different subunits. Subunits NuoA, H, J, K, L, M, N constitute the membrane sector of the complex.

It is found in the cell inner membrane. The catalysed reaction is a quinone + NADH + 5 H(+)(in) = a quinol + NAD(+) + 4 H(+)(out). In terms of biological role, NDH-1 shuttles electrons from NADH, via FMN and iron-sulfur (Fe-S) centers, to quinones in the respiratory chain. The immediate electron acceptor for the enzyme in this species is believed to be ubiquinone. Couples the redox reaction to proton translocation (for every two electrons transferred, four hydrogen ions are translocated across the cytoplasmic membrane), and thus conserves the redox energy in a proton gradient. This subunit may bind ubiquinone. The polypeptide is NADH-quinone oxidoreductase subunit H (Cupriavidus taiwanensis (strain DSM 17343 / BCRC 17206 / CCUG 44338 / CIP 107171 / LMG 19424 / R1) (Ralstonia taiwanensis (strain LMG 19424))).